Consider the following 540-residue polypeptide: GMP synthase [glutamine-hydrolyzing] (540 aa).

One can recognise a Glutamine amidotransferase type-1 domain in the interval 29–222 (KILIVDFGSQ…VRKVAGLTGD (194 aa)). Cys-106 serves as the catalytic Nucleophile. Residues His-196 and Glu-198 contribute to the active site. Positions 223 to 415 (WTMRAFREEA…LGLPDVFVGR (193 aa)) constitute a GMPS ATP-PPase domain. 250-256 (SGGVDSA) contacts ATP.

In terms of assembly, homodimer.

The catalysed reaction is XMP + L-glutamine + ATP + H2O = GMP + L-glutamate + AMP + diphosphate + 2 H(+). The protein operates within purine metabolism; GMP biosynthesis; GMP from XMP (L-Gln route): step 1/1. Functionally, catalyzes the synthesis of GMP from XMP. In Rhodopseudomonas palustris (strain ATCC BAA-98 / CGA009), this protein is GMP synthase [glutamine-hydrolyzing].